The following is a 250-amino-acid chain: N-acyl homoserine lactonase (250 aa).

7 residues coordinate Zn(2+): H104, H106, D108, H109, H169, D191, and H235.

The protein belongs to the metallo-beta-lactamase superfamily. As to quaternary structure, monomer. The cofactor is Zn(2+).

The catalysed reaction is an N-acyl-L-homoserine lactone + H2O = an N-acyl-L-homoserine + H(+). Its function is as follows. Catalyzes hydrolysis of N-hexanoyl-(S)-homoserine lactone, but not the R-enantiomer. Hydrolyzes short- and long-chain N-acyl homoserine lactones with or without 3-oxo substitution at C3, has maximum activity on C10-AHL. In Bacillus thuringiensis subsp. indiana, this protein is N-acyl homoserine lactonase.